The primary structure comprises 322 residues: NADH-quinone oxidoreductase subunit H (322 aa).

9 helical membrane-spanning segments follow: residues 15 to 35 (FFKV…LSIV), 50 to 69 (NRVG…KILF), 81 to 101 (FIFV…IPII), 114 to 134 (IGIL…LFAG), 149 to 169 (ACVQ…GVVA), 186 to 206 (IWNV…GLAV), 237 to 257 (FFIG…TLFF), 265 to 285 (IPGC…FILI), and 302 to 322 (WKFC…LILV).

It belongs to the complex I subunit 1 family. As to quaternary structure, NDH-1 is composed of 13 different subunits. Subunits NuoA, H, J, K, L, M, N constitute the membrane sector of the complex.

It localises to the cell membrane. It carries out the reaction a quinone + NADH + 5 H(+)(in) = a quinol + NAD(+) + 4 H(+)(out). In terms of biological role, NDH-1 shuttles electrons from NADH, via FMN and iron-sulfur (Fe-S) centers, to quinones in the respiratory chain. The immediate electron acceptor for the enzyme in this species is believed to be ubiquinone. Couples the redox reaction to proton translocation (for every two electrons transferred, four hydrogen ions are translocated across the cytoplasmic membrane), and thus conserves the redox energy in a proton gradient. This subunit may bind ubiquinone. This chain is NADH-quinone oxidoreductase subunit H, found in Buchnera aphidicola subsp. Acyrthosiphon pisum (strain 5A).